A 338-amino-acid polypeptide reads, in one-letter code: Ribosomal RNA large subunit methyltransferase F (338 aa).

The interval 1–21 (MTQKKNKPTQKKKGLHPRNPH) is disordered.

Belongs to the methyltransferase superfamily. METTL16/RlmF family.

It is found in the cytoplasm. It catalyses the reaction adenosine(1618) in 23S rRNA + S-adenosyl-L-methionine = N(6)-methyladenosine(1618) in 23S rRNA + S-adenosyl-L-homocysteine + H(+). Functionally, specifically methylates the adenine in position 1618 of 23S rRNA. This Photobacterium profundum (strain SS9) protein is Ribosomal RNA large subunit methyltransferase F.